The chain runs to 256 residues: NAD(P)H-hydrate epimerase (256 aa).

The span at 1 to 18 shows a compositional bias: basic and acidic residues; the sequence is MADPRRDPAAESKDRPST. The disordered stretch occupies residues 1–21; sequence MADPRRDPAAESKDRPSTERV. In terms of domain architecture, YjeF N-terminal spans 23–229; that stretch reads AYTADAVRAA…DLGLEPYLRR (207 aa). 74–78 is a binding site for (6S)-NADPHX; that stretch reads DNGGD. K(+)-binding residues include N75 and D135. Residues 139–147 and D172 contribute to the (6S)-NADPHX site; that span reads GIGRLADRR. Residue S175 participates in K(+) binding.

Belongs to the NnrE/AIBP family. It depends on K(+) as a cofactor.

The enzyme catalyses (6R)-NADHX = (6S)-NADHX. It catalyses the reaction (6R)-NADPHX = (6S)-NADPHX. Its function is as follows. Catalyzes the epimerization of the S- and R-forms of NAD(P)HX, a damaged form of NAD(P)H that is a result of enzymatic or heat-dependent hydration. This is a prerequisite for the S-specific NAD(P)H-hydrate dehydratase to allow the repair of both epimers of NAD(P)HX. In Microbacterium testaceum (strain StLB037), this protein is NAD(P)H-hydrate epimerase.